The sequence spans 548 residues: Biotin-dependent acetyl-/propionyl-coenzyme A carboxylase beta5 subunit (548 aa).

Residues 1–23 form a disordered region; sequence MTSVTDRSAHSAERSTEHTIDIH. The segment covering 7 to 21 has biased composition (basic and acidic residues); that stretch reads RSAHSAERSTEHTID. In terms of domain architecture, CoA carboxyltransferase N-terminal spans 25 to 281; the sequence is TAGKLAELHK…NNSTDAPRYQ (257 aa). One can recognise a CoA carboxyltransferase C-terminal domain in the interval 295–541; sequence DEDLELDTLI…ERKIAQLPPK (247 aa).

The protein belongs to the AccD/PCCB family. Forms homohexamers. The biotin-dependent acyl-CoA carboxylase complex is composed of AccA3, which contains the biotin carboxylase (BC) and biotin carboxyl carrier protein (BCCP) domains, and AccD5, which contains the carboxyl transferase (CT) domain. The AccA3/AccD5 complex forms a dodecamer, and can associate with the epsilon subunit AccE5 (Rv3280), which stimulates carboxylation by the complex. Is also part of the long-chain acyl-CoA carboxylase (LCC) complex, which is composed of AccA3, AccD4, AccD5 and AccE5. The four subunits are essential for activity, but AccD5, together with AccE5, probably plays a structural role rather than a catalytic one.

It carries out the reaction N(6)-carboxybiotinyl-L-lysyl-[protein] + acetyl-CoA = N(6)-biotinyl-L-lysyl-[protein] + malonyl-CoA. The catalysed reaction is N(6)-carboxybiotinyl-L-lysyl-[protein] + propanoyl-CoA = methylmalonyl-CoA + N(6)-biotinyl-L-lysyl-[protein]. Its pathway is lipid metabolism; mycolic acid biosynthesis. Carboxylase activity of the AccA3/AccD5 complex is stimulated by interaction with AccE5. In terms of biological role, component of a biotin-dependent acyl-CoA carboxylase complex. This subunit transfers the CO2 from carboxybiotin to the CoA ester substrate. When associated with the alpha3 subunit AccA3, is involved in the carboxylation of acetyl-CoA and propionyl-CoA, with a preference for propionyl-CoA. Is also required for the activity of the long-chain acyl-CoA carboxylase (LCC) complex. The polypeptide is Biotin-dependent acetyl-/propionyl-coenzyme A carboxylase beta5 subunit (Mycobacterium tuberculosis (strain ATCC 25618 / H37Rv)).